The sequence spans 178 residues: M-phase-specific PLK1-interacting protein (178 aa).

Residues 1–15 (MHRPNFRPPTPPYPS) show a composition bias toward pro residues. Residues 1–134 (MHRPNFRPPT…RGREKRMSNE (134 aa)) are disordered. Gly residues predominate over residues 17-34 (GIGGWGGGNNFRGALGGG). Arg36 carries the asymmetric dimethylarginine modification. A phosphoserine mark is found at Ser39 and Ser46. Thr50 bears the Phosphothreonine mark. Position 56 is an omega-N-methylarginine (Arg56). 3 positions are modified to asymmetric dimethylarginine: Arg58, Arg67, and Arg76. Low complexity predominate over residues 78–96 (GSPSPGGYPGSYSRSPAGS). 5 positions are modified to phosphoserine: Ser79, Ser81, Ser92, Ser103, and Ser114. A compositionally biased stretch (polar residues) spans 97–121 (QHQFGYSPGQQQTYPQGSPRTSTPF). Position 116 is an omega-N-methylarginine (Arg116). Position 119 is a phosphothreonine (Thr119). Residues Ser123 and Ser132 each carry the phosphoserine modification.

In terms of assembly, interacts with PLK1; phosphorylation-dependent. Post-translationally, phosphorylated during mitosis in the cell cycle probably by CDK1.

It localises to the nucleus. The protein resides in the cytoplasm. The protein localises to the cytoskeleton. Its subcellular location is the microtubule organizing center. It is found in the centrosome. May play a role in maintenance of cell cycle integrity by regulating mitosis or cytokinesis. The sequence is that of M-phase-specific PLK1-interacting protein (Mplkip) from Mus musculus (Mouse).